A 2213-amino-acid polypeptide reads, in one-letter code: MARGARPSAAGGGGGGAEPPERAGPGRPRGSPPGRARPSLAPRPGPEPSRPRAAPETSGGDTAGAGRCGGRRAAKLGPGRRGWWALLALQLHLLRALAQDDVAPYFKTEPGLPQIHLEGNRLVLTCLAEGSWPLEFKWMRDDSELTTYSSEYKYIIPSLQKLDAGFYRCVVRNRMGALLQRKSEVQVAYMGSFMDTDQRKTVSQGRAAILNLLPITSYPRPQVTWFREGHKIIPSNRIAITLENQLVILATTTSDAGAYYVQAVNEKNGENKTSPFIHLSIARDVGTPETMAPTIVVPPGNRSVVAGSSETTLECIASARPVEDLSVTWKRNGVRITSGLHSFGRRLTISNPTSADTGPYVCEAALPGSAFEPARATAFLFIIEPPYFTAEPESRISAEVEETVDIGCQAMGVPLPTLQWYKDAISISRLQNPRYKVLASGGLRIQKLRPEDSGIFQCFASNEGGEIQTHTYLDVTNIAPVFTQRPVDTTVTDGMTAILRCEVSGAPKPAITWKRENHILASGSVRIPRFMLLESGGLQIAPVFIQDAGNYTCYAANTEGSLNASATLTVWNRTSIVHPPEDHVVIKGTTATLHCGATHDPRVSLRYVWKKDNVALTPSSTSRIVVEKDGSLLISQTWSGDIGDYSCEIVSEGGNDSRMARLEVIELPHSPQNLLVSPNSSHSHAVVLSWVRPFDGNSPILYYIVELSENNSPWKVHLSNVGPEMTGVTVSGLTPARTYQFRVCAVNEVGRGQYSAETSRLMLPEEPPSAPPKNIVASGRTNQSIMVQWQPPPETEHNGVLRGYILRYRLAGLPGEYQQRNITSPEVNYCLVTDLIIWTQYEIQVAAYNGAGLGVFSRAVTEYTLQGVPTAPPQNVQTEAVNSTTIQFLWNPPPQQFINGINQGYKLLAWPADAPEAVTVVTIAPDFHGVHHGHITNLKKFTAYFTSVLCFTTPGDGPPSTPQLVWTQEDKPGAVGHLSFTEILDTSLKVSWQEPLEKNGIITGYQISWEVYGRNDSRLTHTLNSTTHEYKIQGLSSLTTYTIDVAAVTAVGTGLVTSSTISSGVPPDLPGAPSNLVISNISPRSATLQFRPGYDGKTSISRWIVEGQVGAIGDEEEWVTLYEEENEPDAQMLEIPNLTPYTHYRFRMKQVNIVGPSPYSPSSRVIQTLQAPPDVAPTSVTVRTASETSLRLRWVPLPDSQYNGNPESVGYRIKYWRSDLQSSAVAQVVSDRLEREFTIEELEEWMEYELQMQAFNAVGAGPWSEVVRGRTRESVPSAAPENVSAEAVSSTQILLTWTSVPEQDQNGLILGYKILFRAKDLDPEPRSHIVRGNHTQSALLAGLRKFVLYELQVLAFTRIGNGVPSTPLILERTKDDAPGPPVRLVFPEVRLTSVRIVWQPPEEPNGIILGYQIAYRLASSSPHTFTTVEVGATVRQFTATDLAPESAYIFRLSAKTRQGWGEPLEATVITTEKRERPAPPRELLVPQAEVTARSLRLQWVPGSDGASPIRYFTMQVRELPRGEWQTYSSSISHEATACVVDRLRPFTSYKLRLKATNDIGDSDFSSETEAVTTLQDVPGEPPGSVSATPHTTSSVLIQWQPPRDESLNGLLQGYRIYYRELEYEAGSGTEAKTLKNPIALHAELTAQSSFKTVNSSSTSTMCELTHLKKYRRYEVIMTAYNIIGESPASAPVEVFVGEAAPAMAPQNVQVTPLTASQLEVTWDPPPPESQNGNIQGYKIYYWEADSQNETEKMKVLFLPEPVVRLKNLTSHTKYLVSISAFNAAGDGPKSDPQQGRTHQAAPGAPSFLAFSEITSTTLNVSWGEPAAANGILQGYRVVYEPLAPVQGVSKVVTVEVRGNWQRWLKVRDLTKGVTYFFRVQARTITYGPELQANITAGPAEGSPGSPRDVLVTKSASELTLQWTEGHSGDTPTTGYVIEARPSDEGLWDMFVKDIPRSATSYTLSLDKLRQGVTYEFRVVAVNEAGYGEPSNPSTAVSAQVEAPFYEEWWFLLVMALSSLIVILLVVFALVLHGQNKKYKNCSTGKGISTMEESVTLDNGGFAALELSSRHLNVKSTFSKKNGTRSPPRPSPGGLHYSDEDICNKYNGAVLTESVSLKEKSADASESEATDSDYEDALPKHSFVNHYMSDPTYYNSWKRRAQGRAPAPHRYEAVAGSEAGAQLHPVITTQSAGGVYTPAGPGARTPLTGFSSFV.

A disordered region spans residues 1–73 (MARGARPSAA…GAGRCGGRRA (73 aa)). Positions 23–38 (AGPGRPRGSPPGRARP) are enriched in low complexity. Ig-like C2-type domains are found at residues 104-186 (PYFK…SEVQ), 191-277 (GSFM…SPFI), 293-378 (PTIV…RATA), 386-476 (PYFT…LDVT), and 480-569 (PVFT…ATLT). Residues C126 and C169 are joined by a disulfide bond. N-linked (GlcNAc...) asparagine glycosylation is found at N271 and N301. 3 cysteine pairs are disulfide-bonded: C315/C362, C408/C458, and C501/C553. N-linked (GlcNAc...) asparagine glycans are attached at residues N550, N563, and N572. One can recognise an Ig-like C2-type 6 domain in the interval 574 to 663 (TSIVHPPEDH…GNDSRMARLE (90 aa)). C595 and C647 are joined by a disulfide. N655, N679, N782, N821, N882, N1015, and N1024 each carry an N-linked (GlcNAc...) asparagine glycan. 13 Fibronectin type-III domains span residues 670–766 (SPQN…LPEE), 771–867 (PPKN…TLQG), 872–970 (PPQN…TQED), 974–1068 (AVGH…VPPD), 1072–1171 (APSN…TLQA), 1176–1274 (APTS…TRES), 1279–1376 (APEN…TKDD), 1380–1474 (PPVR…TEKR), 1479–1576 (PPRE…TLQD), 1581–1699 (PPGS…VGEA), 1704–1800 (APQN…THQA), 1804–1899 (APSF…AGPA), and 1902–2000 (SPGS…SAQV). N1282 and N1333 each carry an N-linked (GlcNAc...) asparagine glycan. N-linked (GlcNAc...) asparagine glycosylation is found at N1654, N1748, N1767, N1819, and N1893. Residues 2010–2030 (FLLVMALSSLIVILLVVFALV) form a helical membrane-spanning segment. Topologically, residues 2031–2213 (LHGQNKKYKN…TPLTGFSSFV (183 aa)) are cytoplasmic. A disordered region spans residues 2075 to 2098 (STFSKKNGTRSPPRPSPGGLHYSD). The PDZ-binding signature appears at 2207-2213 (TGFSSFV).

Belongs to the sidekick family. As to quaternary structure, homodimer; mediates homophilic interactions to promote cell adhesion. Up-regulated in glomeruli in HIV-associated nephropathy. In diseased glomeruli, significantly overexpressed and the expression is no longer restricted to mesangial cells but includes podocytes and parietal epithelial cells.

Its subcellular location is the cell membrane. It localises to the synapse. Adhesion molecule that promotes lamina-specific synaptic connections in the retina. Expressed in specific subsets of interneurons and retinal ganglion cells (RGCs) and promotes synaptic connectivity via homophilic interactions. The polypeptide is Protein sidekick-1 (Homo sapiens (Human)).